Consider the following 442-residue polypeptide: Chromosomal replication initiator protein DnaA (442 aa).

The domain I, interacts with DnaA modulators stretch occupies residues Met-1–Gly-75. Positions Gly-75–Gly-104 are domain II. Positions Asn-105–Ala-322 are domain III, AAA+ region. Gly-150, Gly-152, Lys-153, and Thr-154 together coordinate ATP. A domain IV, binds dsDNA region spans residues Asn-323 to Glu-442.

The protein belongs to the DnaA family. As to quaternary structure, oligomerizes as a right-handed, spiral filament on DNA at oriC.

The protein localises to the cytoplasm. In terms of biological role, plays an essential role in the initiation and regulation of chromosomal replication. ATP-DnaA binds to the origin of replication (oriC) to initiate formation of the DNA replication initiation complex once per cell cycle. Binds the DnaA box (a 9 base pair repeat at the origin) and separates the double-stranded (ds)DNA. Forms a right-handed helical filament on oriC DNA; dsDNA binds to the exterior of the filament while single-stranded (ss)DNA is stabiized in the filament's interior. The ATP-DnaA-oriC complex binds and stabilizes one strand of the AT-rich DNA unwinding element (DUE), permitting loading of DNA polymerase. After initiation quickly degrades to an ADP-DnaA complex that is not apt for DNA replication. Binds acidic phospholipids. The sequence is that of Chromosomal replication initiator protein DnaA from Xanthomonas oryzae pv. oryzae (strain PXO99A).